The following is a 125-amino-acid chain: MRHYEIVFIVHPDQSEQVSAMIERYRNIVTARNGQVHRLEDWGRRQLAYLIQKVHKAHYVLMNIECDQETLDELEHAFKFNDAILRHLTLKMDEPVTAPSPMMREEKAKSAPQPAEEAKETTLAT.

The disordered stretch occupies residues 96–125 (VTAPSPMMREEKAKSAPQPAEEAKETTLAT). A compositionally biased stretch (basic and acidic residues) spans 116–125 (EEAKETTLAT).

This sequence belongs to the bacterial ribosomal protein bS6 family.

In terms of biological role, binds together with bS18 to 16S ribosomal RNA. The chain is Small ribosomal subunit protein bS6 from Nitrosospira multiformis (strain ATCC 25196 / NCIMB 11849 / C 71).